Reading from the N-terminus, the 170-residue chain is MGEFSATILAASQAAEEGGGGSNFLIPNGTFFAVLIIFLIVLGVISKWVVPPISKVLAEREAMLAKTAADNRKSAEQVAAAQADYEKEMAEARAQASALRDEARAAGRSVVDEKRAQASGEVAQTLTQADQQLSAQGDQVRSGLESSVDGLSAKLASRILGVDVNSGGTQ.

A helical membrane pass occupies residues 25-45 (LIPNGTFFAVLIIFLIVLGVI). Residues 121–147 (EVAQTLTQADQQLSAQGDQVRSGLESS) form a disordered region. Polar residues predominate over residues 122–139 (VAQTLTQADQQLSAQGDQ).

The protein belongs to the ATPase B chain family. In terms of assembly, F-type ATPases have 2 components, F(1) - the catalytic core - and F(0) - the membrane proton channel. F(1) has five subunits: alpha(3), beta(3), gamma(1), delta(1), epsilon(1). F(0) has three main subunits: a(1), b(2) and c(10-14). The alpha and beta chains form an alternating ring which encloses part of the gamma chain. F(1) is attached to F(0) by a central stalk formed by the gamma and epsilon chains, while a peripheral stalk is formed by the delta and b chains.

It localises to the cell membrane. Functionally, f(1)F(0) ATP synthase produces ATP from ADP in the presence of a proton or sodium gradient. F-type ATPases consist of two structural domains, F(1) containing the extramembraneous catalytic core and F(0) containing the membrane proton channel, linked together by a central stalk and a peripheral stalk. During catalysis, ATP synthesis in the catalytic domain of F(1) is coupled via a rotary mechanism of the central stalk subunits to proton translocation. Its function is as follows. Component of the F(0) channel, it forms part of the peripheral stalk, linking F(1) to F(0). This chain is ATP synthase subunit b, found in Mycolicibacterium smegmatis (strain ATCC 700084 / mc(2)155) (Mycobacterium smegmatis).